The primary structure comprises 462 residues: Gamma-aminobutyric acid receptor subunit alpha-5 (462 aa).

The signal sequence occupies residues 1-31 (MDNGMFSGFIMIKNLLLFCISMNLSSHFGFS). Residues 32 to 260 (QMPTSSVKDE…FHLKRKIGYF (229 aa)) are Extracellular-facing. N-linked (GlcNAc...) asparagine glycosylation is present at Asn-45. 4-aminobutanoate is bound at residue Arg-101. Asn-145 is a glycosylation site (N-linked (GlcNAc...) asparagine). Thr-164 serves as a coordination point for 4-aminobutanoate. Residues Cys-173 and Cys-187 are joined by a disulfide bond. N-linked (GlcNAc...) asparagine glycosylation is found at Asn-207 and Asn-236. Residues 261 to 281 (VIQTYLPCIMTVILSQVSFWL) traverse the membrane as a helical segment. Residues 282–286 (NRESV) lie on the Cytoplasmic side of the membrane. Residues 287–308 (PARTVFGVTTVLTMTTLSISAR) traverse the membrane as a helical segment. Residues 309 to 318 (NSLPKVAYAT) lie on the Extracellular side of the membrane. A helical transmembrane segment spans residues 319–340 (AMDWFIAVCYAFVFSALIEFAT). Residues 341 to 427 (VNYFTKRGWA…TYNSISKIDK (87 aa)) are Cytoplasmic-facing. Residue Lys-355 forms a Glycyl lysine isopeptide (Lys-Gly) (interchain with G-Cter in ubiquitin) linkage. Positions 377–412 (FTTGKMSHPPNIPKEQTPAGTSNTTSVSVKPSEEKT) are disordered. Residues 428–448 (MSRIVFPVLFGTFNLVYWATY) traverse the membrane as a helical segment. Residues 449 to 462 (LNREPVIKGAASPK) are Extracellular-facing.

It belongs to the ligand-gated ion channel (TC 1.A.9) family. Gamma-aminobutyric acid receptor (TC 1.A.9.5) subfamily. GABRA5 sub-subfamily. As to quaternary structure, heteropentamer, formed by a combination of alpha (GABRA1-6), beta (GABRB1-3), gamma (GABRG1-3), delta (GABRD), epsilon (GABRE), rho (GABRR1-3), pi (GABRP) and theta (GABRQ) chains, each subunit exhibiting distinct physiological and pharmacological properties.

The protein resides in the postsynaptic cell membrane. Its subcellular location is the cell membrane. The catalysed reaction is chloride(in) = chloride(out). In terms of biological role, alpha subunit of the heteropentameric ligand-gated chloride channel gated by gamma-aminobutyric acid (GABA), a major inhibitory neurotransmitter in the brain. GABA-gated chloride channels, also named GABA(A) receptors (GABAAR), consist of five subunits arranged around a central pore and contain GABA active binding site(s) located at the alpha and beta subunit interface(s). When activated by GABA, GABAARs selectively allow the flow of chloride anions across the cell membrane down their electrochemical gradient. GABAARs containing alpha-5/GABRA5 subunits are mainly extrasynaptic and contribute to the tonic GABAergic inhibition in the hippocampus. Extrasynaptic alpha-5-containing GABAARs in CA1 pyramidal neurons play a role in learning and memory processes. The polypeptide is Gamma-aminobutyric acid receptor subunit alpha-5 (Homo sapiens (Human)).